We begin with the raw amino-acid sequence, 393 residues long: Probable protein phosphatase 2C 72 (393 aa).

Positions 49–357 constitute a PPM-type phosphatase domain; it reads EFSMAVVQAN…DDITVVVVFF (309 aa). Mn(2+) is bound by residues Asp-88 and Gly-89. Residues 147–167 form a helical membrane-spanning segment; that stretch reads LAAVGSCCLVGVICAGNLYIA. Mn(2+) contacts are provided by Asp-289 and Asp-348.

This sequence belongs to the PP2C family. The cofactor is Mg(2+). Mn(2+) serves as cofactor.

The protein localises to the membrane. The catalysed reaction is O-phospho-L-seryl-[protein] + H2O = L-seryl-[protein] + phosphate. It catalyses the reaction O-phospho-L-threonyl-[protein] + H2O = L-threonyl-[protein] + phosphate. This Oryza sativa subsp. japonica (Rice) protein is Probable protein phosphatase 2C 72.